We begin with the raw amino-acid sequence, 90 residues long: MAHKKAGGSSRNGRDSHGKRLGIKAFGGEHVIPGNIIARQRGTTWHPGLNVGMGTDHTLFAKVEGHVAFRVKTGGRTFVSVLPMTEAAAE.

The segment at 1–21 (MAHKKAGGSSRNGRDSHGKRL) is disordered.

Belongs to the bacterial ribosomal protein bL27 family.

The protein is Large ribosomal subunit protein bL27 of Nitrobacter winogradskyi (strain ATCC 25391 / DSM 10237 / CIP 104748 / NCIMB 11846 / Nb-255).